The primary structure comprises 347 residues: NADH-ubiquinone oxidoreductase chain 2 (347 aa).

Helical transmembrane passes span 4–21, 26–44, 59–79, 93–115, 149–169, 178–198, 200–220, 241–261, 274–294, and 323–343; these read LALIMITTTIILGTVIVM, WLLVWIGFEMNMLAVIPVL, YFLTQATASMLLMLAVVTNLL, LASTVMTLALAMKLGLSPFHFWV, LNLNLLLAMATVSVAVGGWGG, ILAYSSIAHMGWMTIILTYNP, LTLLNLLLYILMTATTFMLFM, ATSVLIIMLSLGGLPPLSGFL, ESIFLPTLMAMMALLSLYFYM, and TPLLSPLIVMSTLALPLAPIL.

It belongs to the complex I subunit 2 family. Core subunit of respiratory chain NADH dehydrogenase (Complex I) which is composed of 45 different subunits. Interacts with TMEM242.

It localises to the mitochondrion inner membrane. The catalysed reaction is a ubiquinone + NADH + 5 H(+)(in) = a ubiquinol + NAD(+) + 4 H(+)(out). In terms of biological role, core subunit of the mitochondrial membrane respiratory chain NADH dehydrogenase (Complex I) which catalyzes electron transfer from NADH through the respiratory chain, using ubiquinone as an electron acceptor. Essential for the catalytic activity and assembly of complex I. The protein is NADH-ubiquinone oxidoreductase chain 2 of Cardioderma cor (Heart-nosed bat).